The sequence spans 527 residues: F-box-like/WD repeat-containing protein TBL1X (527 aa).

An N-acetylserine modification is found at serine 2. One can recognise a LisH domain in the interval 4-36; it reads TSDEVNFLVYRYLQESGFSHSAFTFGIESHISQ. In terms of domain architecture, F-box-like spans 41-86; sequence GTLVPPAALISILQKGLQYVEAEISINEDGTVFDGRPIESLSLIDA. Residue lysine 102 is modified to N6-acetyllysine. A disordered region spans residues 127–164; it reads TTPAAAAQQNPPKNGEATVNGEENGAHAINNHSKPMEI. 8 WD repeats span residues 180–219, 236–275, 277–316, 319–359, 360–399, 402–450, 453–492, and 494–526; these read GHES…NGGS, PSNK…ASTL, QHKG…AKQQ, FHSA…KTFQ, GHTN…CVHD, AHSK…CIHT, KHQE…LVHS, and RGTG…LDLR. Lysine 290 participates in a covalent cross-link: Glycyl lysine isopeptide (Lys-Gly) (interchain with G-Cter in SUMO2).

The protein belongs to the WD repeat EBI family. Homotetramer; dimer of dimers. Component of the N-Cor repressor complex, at least composed of NCOR1, NCOR2, HDAC3, TBL1X, TBL1R, CORO2A and GPS2. Component of a E3 ubiquitin ligase complex containing UBE2D1, SIAH1, CACYBP/SIP, SKP1, APC and TBL1X. Interacts with GPS2 (when sumoylated); leading to protect GPS2 against degradation by the proteasome. Probably part of other corepressor complexes, that do not contain NCOR1 and NCOR2. Interacts with histones H2B, H3a and H4. Interacts with MECP2; recruits TBL1X to the heterochromatin foci. Interacts with USP44. In terms of tissue distribution, expressed in the cochlea.

Its subcellular location is the nucleus. In terms of biological role, F-box-like protein involved in the recruitment of the ubiquitin/19S proteasome complex to nuclear receptor-regulated transcription units. Plays an essential role in transcription activation mediated by nuclear receptors. Probably acts as integral component of corepressor complexes that mediates the recruitment of the 19S proteasome complex, leading to the subsequent proteasomal degradation of transcription repressor complexes, thereby allowing cofactor exchange. The sequence is that of F-box-like/WD repeat-containing protein TBL1X (Tbl1x) from Mus musculus (Mouse).